The sequence spans 665 residues: FAD-dependent oxidoreductase domain-containing protein 2 (665 aa).

The signal sequence occupies residues 1-17 (MGPSGLLVALALHLAVC). Residue N136 is glycosylated (N-linked (GlcNAc...) asparagine). The segment at 642 to 665 (RWLGDHSTAPEPLTQSLDSNKEEL) is disordered. Residues 662-665 (KEEL) carry the Prevents secretion from ER motif.

This sequence belongs to the FOXRED2 family. Interacts with SEL1L. May interact with OS9 and DNAJC10. Interacts with TXNDC16. The cofactor is FAD. N-glycosylated.

It localises to the endoplasmic reticulum lumen. In terms of biological role, probable flavoprotein which may function in endoplasmic reticulum associated degradation (ERAD). May bind non-native proteins in the endoplasmic reticulum and target them to the ubiquitination machinery for subsequent degradation. In Mus musculus (Mouse), this protein is FAD-dependent oxidoreductase domain-containing protein 2.